The chain runs to 283 residues: Homeobox protein BarH-like 2 (283 aa).

Disordered stretches follow at residues 107–141 and 198–283; these read AAAA…RRSR and KGGQ…PPLS. Residues 122-132 show a composition bias toward polar residues; it reads SSESETEQPTP. The segment at residues 139 to 198 is a DNA-binding region (homeobox); that stretch reads RSRTIFTELQLMGLEKKFQKQKYLSTPDRLDLAQSLGLTQLQVKTWYQNRRMKWKKMVLK. Over residues 268–277 the composition is skewed to low complexity; it reads QPQELSEASS.

This sequence belongs to the BAR homeobox family. As to expression, nervous system, particularly in the telencephalon, spinal cord, and dorsal root ganglia.

It localises to the nucleus. Functionally, transcription factor. Binds optimally to the DNA consensus sequence 5'-YYTAATGRTTTTY-3'. May control the expression of neural adhesion molecules such as L1 or Ng-CAM during embryonic development of both the central and peripherical nervous system. May be involved in controlling adhesive processes in keratinizing epithelia. This is Homeobox protein BarH-like 2 (Barx2) from Mus musculus (Mouse).